Reading from the N-terminus, the 183-residue chain is Dual-action ribosomal maturation protein DarP (183 aa).

This sequence belongs to the DarP family.

Its subcellular location is the cytoplasm. Functionally, member of a network of 50S ribosomal subunit biogenesis factors which assembles along the 30S-50S interface, preventing incorrect 23S rRNA structures from forming. Promotes peptidyl transferase center (PTC) maturation. The sequence is that of Dual-action ribosomal maturation protein DarP from Klebsiella pneumoniae (strain 342).